The primary structure comprises 213 residues: Octanoyltransferase (213 aa).

Positions 35 to 213 (DERGDAVLLL…ERHLPTLIEP (179 aa)) constitute a BPL/LPL catalytic domain. Residues 73–80 (RGGKITWH), 145–147 (AIG), and 158–160 (GFS) each bind substrate. Cys176 functions as the Acyl-thioester intermediate in the catalytic mechanism.

The protein belongs to the LipB family.

It is found in the cytoplasm. It catalyses the reaction octanoyl-[ACP] + L-lysyl-[protein] = N(6)-octanoyl-L-lysyl-[protein] + holo-[ACP] + H(+). Its pathway is protein modification; protein lipoylation via endogenous pathway; protein N(6)-(lipoyl)lysine from octanoyl-[acyl-carrier-protein]: step 1/2. Catalyzes the transfer of endogenously produced octanoic acid from octanoyl-acyl-carrier-protein onto the lipoyl domains of lipoate-dependent enzymes. Lipoyl-ACP can also act as a substrate although octanoyl-ACP is likely to be the physiological substrate. The sequence is that of Octanoyltransferase from Salinispora tropica (strain ATCC BAA-916 / DSM 44818 / JCM 13857 / NBRC 105044 / CNB-440).